Here is a 156-residue protein sequence, read N- to C-terminus: Small ribosomal subunit protein uS7 (156 aa).

Belongs to the universal ribosomal protein uS7 family. As to quaternary structure, part of the 30S ribosomal subunit. Contacts proteins S9 and S11.

Functionally, one of the primary rRNA binding proteins, it binds directly to 16S rRNA where it nucleates assembly of the head domain of the 30S subunit. Is located at the subunit interface close to the decoding center, probably blocks exit of the E-site tRNA. The sequence is that of Small ribosomal subunit protein uS7 from Bartonella henselae (strain ATCC 49882 / DSM 28221 / CCUG 30454 / Houston 1) (Rochalimaea henselae).